The following is a 133-amino-acid chain: Small ribosomal subunit protein uS8 (133 aa).

The protein belongs to the universal ribosomal protein uS8 family. As to quaternary structure, part of the 30S ribosomal subunit. Contacts proteins S5 and S12.

Functionally, one of the primary rRNA binding proteins, it binds directly to 16S rRNA central domain where it helps coordinate assembly of the platform of the 30S subunit. The protein is Small ribosomal subunit protein uS8 of Chloroflexus aggregans (strain MD-66 / DSM 9485).